The sequence spans 411 residues: Intracellular hyaluronan-binding protein 4 (411 aa).

Phosphoserine is present on residues S7 and S36. A coiled-coil region spans residues 42 to 62; it reads LREAEHRRQQQLQRKRRDEAA. The interval 42 to 271 is disordered; sequence LREAEHRRQQ…ECQGTLDEES (230 aa). Omega-N-methylarginine is present on R70. Position 74 is a phosphoserine (S74). Residues 87 to 97 show a composition bias toward basic and acidic residues; it reads GRRESQKERKS. The residue at position 108 (S108) is a Phosphoserine. Basic and acidic residues-rich tracts occupy residues 138–181 and 205–229; these read VLER…DRPL and DSFD…RMED. Residues K212 and K274 each participate in a glycyl lysine isopeptide (Lys-Gly) (interchain with G-Cter in SUMO1); alternate cross-link. Glycyl lysine isopeptide (Lys-Gly) (interchain with G-Cter in SUMO2); alternate cross-links involve residues K212 and K274. Residues 279–301 adopt a coiled-coil conformation; that stretch reads EVEEENQVQEMTLDEWKNLQEQT. Basic and acidic residues predominate over residues 296 to 313; it reads NLQEQTRPKPEFNIRKPE. A disordered region spans residues 296–318; it reads NLQEQTRPKPEFNIRKPESTVPS. Residue K334 forms a Glycyl lysine isopeptide (Lys-Gly) (interchain with G-Cter in SUMO1); alternate linkage. A Glycyl lysine isopeptide (Lys-Gly) (interchain with G-Cter in SUMO2); alternate cross-link involves residue K334. T352 and T373 each carry phosphothreonine; by PKC. Residues 358-411 form a disordered region; sequence NFGNLPRPGRGARGSTRGGRGRMRRTENYGPRAEVVTQDVAPNPDDPEDFPALA. Acidic residues predominate over residues 402–411; sequence DDPEDFPALA.

This sequence belongs to the SERBP1-HABP4 family. Associates with ribosomes; promoting ribosome stabilization. Interacts with EEF2/eEF2; promoting ribosome stabilization. Interacts with FMR1. Interacts with FXR1 and FXR2. Interacts with CHD3 (via C-terminus). Interacts (via C-terminus) with RACK1. Interacts with p53/TP53. Interacts (via N-terminus) with SRSF9; this interaction is direct. Interacts with SYNCRIP; this interaction is direct. Interacts with MEF2C (via N-terminus); this interaction decreases DNA-binding activity of MEF2C in myocardial cells in response to mechanical stress. Interacts with PRMT1 (via N-terminus). Interacts with SPIN1. Phosphorylated by phorbol 12-myristate 13-acetate (PMA)-activated PKC isoforms at Thr-352 and Thr-373. Post-translationally, methylated. Methylation is decreased by phorbol 12-myristate 13-acetate (PMA)-activated PKC, in vitro. In terms of tissue distribution, expressed in adult heart, brain, liver, kidney, testis, and in various embryonic tissues, but not in adult spleen, lung or skeletal muscle.

It localises to the nucleus. Its subcellular location is the cytoplasm. The protein localises to the stress granule. The protein resides in the sarcoplasm. It is found in the nuclear body. It localises to the nucleolus. Its subcellular location is the nucleus speckle. The protein localises to the cajal body. The protein resides in the gem. Ribosome-binding protein that promotes ribosome hibernation, a process during which ribosomes are stabilized in an inactive state and preserved from proteasomal degradation. Acts via its association with EEF2/eEF2 factor at the A-site of the ribosome, promoting ribosome stabilization in an inactive state compatible with storage. Plays a key role in ribosome hibernation in the mature oocyte by promoting ribosome stabilization. Ribosomes, which are produced in large quantities during oogenesis, are stored and translationally repressed in the oocyte and early embryo. Also binds RNA, regulating transcription and pre-mRNA splicing. Binds (via C-terminus) to poly(U) RNA. Seems to play a role in PML-nuclear bodies formation. Negatively regulates DNA-binding activity of the transcription factor MEF2C in myocardial cells in response to mechanical stress. This chain is Intracellular hyaluronan-binding protein 4, found in Mus musculus (Mouse).